The following is a 359-amino-acid chain: Flavonoid 8-O-methyltransferase 1 (359 aa).

Residue Asp-223 coordinates S-adenosyl-L-methionine. His-261 functions as the Proton acceptor in the catalytic mechanism.

Belongs to the class I-like SAM-binding methyltransferase superfamily. Cation-independent O-methyltransferase family. As to expression, expressed in leaves and trichomes, especially in cv. SD and cv. EMX-1, but barely in cv. MC and cv. SW.

The catalysed reaction is an 8-hydroxyflavone + S-adenosyl-L-methionine = an 8-methoxyflavone + S-adenosyl-L-homocysteine + H(+). It catalyses the reaction 4',7,8-trihydroxyflavone + S-adenosyl-L-methionine = 4',7-dihydroxy-8-methoxyflavone + S-adenosyl-L-homocysteine + H(+). It carries out the reaction 7,8-dihydroxyflavone + S-adenosyl-L-methionine = 7-hydroxy-8-methoxyflavone + S-adenosyl-L-homocysteine + H(+). The enzyme catalyses 3',4',7,8-tetrahydroxyflavone + S-adenosyl-L-methionine = 3',4,7-trihydroxy-8-methoxyflavone + S-adenosyl-L-homocysteine + H(+). The protein operates within flavonoid metabolism. Its activity is regulated as follows. Strongly inhibited by gardenin B (GARD B). In terms of biological role, cation-independent flavonoid 8-O-methyltransferase involved in the biosynthesis of polymethoxylated flavonoids natural products such as nevadensin and salvigenin, aroma compounds which contribute to the flavor of sweet basil, and exhibit pharmacological activities such as anti-allergic, anti-oxidant, antibacterial, anti-proliferative, and anti-inflammatory effects. Catalyzes S-adenosylmethionine-dependent regioselective 8-O-methylation of flavonoids; mediates likely the conversion of pilosin (PIL) to nevadensin (NEV) and of 8-hydroxysalvigenin (8-OH-SALV) to gardenin B (GARD B). Can also use 3',4',7,8-tetrahydroxyflavone as substrate. Accepts other unnatural O-diphenols including 7,8,4'-trihydroxy-flavone and 7-O-methyl-8-hydroxy-flavone, and, with a lower efficiency, 7,8-dihydroxy-flavone, as substrates. The chain is Flavonoid 8-O-methyltransferase 1 from Ocimum basilicum (Sweet basil).